We begin with the raw amino-acid sequence, 350 residues long: Flap endonuclease 1 (350 aa).

Residues 1–102 (MGVNLKDLIP…KEIEKRRKIR (102 aa)) are N-domain. Residues D31, D84, E156, E158, D177, D179, and D240 each contribute to the Mg(2+) site. The I-domain stretch occupies residues 120-262 (AARRYAMMSA…KALQLVKAYK (143 aa)). The interval 341-349 (KQLGLEAWF) is interaction with PCNA.

This sequence belongs to the XPG/RAD2 endonuclease family. FEN1 subfamily. In terms of assembly, interacts with PCNA. PCNA stimulates the nuclease activity without altering cleavage specificity. Mg(2+) serves as cofactor.

Structure-specific nuclease with 5'-flap endonuclease and 5'-3' exonuclease activities involved in DNA replication and repair. During DNA replication, cleaves the 5'-overhanging flap structure that is generated by displacement synthesis when DNA polymerase encounters the 5'-end of a downstream Okazaki fragment. Binds the unpaired 3'-DNA end and kinks the DNA to facilitate 5' cleavage specificity. Cleaves one nucleotide into the double-stranded DNA from the junction in flap DNA, leaving a nick for ligation. Also involved in the base excision repair (BER) pathway. Acts as a genome stabilization factor that prevents flaps from equilibrating into structures that lead to duplications and deletions. Also possesses 5'-3' exonuclease activity on nicked or gapped double-stranded DNA. The chain is Flap endonuclease 1 from Staphylothermus marinus (strain ATCC 43588 / DSM 3639 / JCM 9404 / F1).